A 350-amino-acid chain; its full sequence is MASFPELSERAQQLLKALVERYIGEGQPVGSRVLARDAGLSPATIRNVMADLEELGLITSPHTSAGRLPTVSGYRLFVDSLLTVKPLHQAIVDQLWLDLESRENPRDLLETASKLLSELTHMACIISMPRRETLVFQHIEFLPLSDNRVLAILVTSDQEIHNKIIHTPHKFSAAELQTAANFFNAVCGGKDMVSAREHLRAELAKERDRLSEQLLQAGEIAEQALAEGGRSRKPFLVRGETNLMDFVELADVDRLRGLFEAFRQKESIVGLLDRCLESPGVKIIIGEESGFRPLEPCSLVTASYSVDNRVMGVLGVIGPTRMKYERVIPLVDVTAKLVGAALNQRTLAPT.

This sequence belongs to the HrcA family.

Negative regulator of class I heat shock genes (grpE-dnaK-dnaJ and groELS operons). Prevents heat-shock induction of these operons. This Methylococcus capsulatus (strain ATCC 33009 / NCIMB 11132 / Bath) protein is Heat-inducible transcription repressor HrcA.